We begin with the raw amino-acid sequence, 449 residues long: Phosphoglucosamine mutase (449 aa).

Ser102 acts as the Phosphoserine intermediate in catalysis. Residues Ser102, Asp243, Asp245, and Asp247 each contribute to the Mg(2+) site. Residue Ser102 is modified to Phosphoserine.

This sequence belongs to the phosphohexose mutase family. It depends on Mg(2+) as a cofactor. Activated by phosphorylation.

The catalysed reaction is alpha-D-glucosamine 1-phosphate = D-glucosamine 6-phosphate. Functionally, catalyzes the conversion of glucosamine-6-phosphate to glucosamine-1-phosphate. The chain is Phosphoglucosamine mutase from Maricaulis maris (strain MCS10) (Caulobacter maris).